Reading from the N-terminus, the 267-residue chain is tRNA pseudouridine synthase A (267 aa).

The active-site Nucleophile is Asp-54. Tyr-114 contacts substrate.

The protein belongs to the tRNA pseudouridine synthase TruA family. In terms of assembly, homodimer.

It catalyses the reaction uridine(38/39/40) in tRNA = pseudouridine(38/39/40) in tRNA. Functionally, formation of pseudouridine at positions 38, 39 and 40 in the anticodon stem and loop of transfer RNAs. The sequence is that of tRNA pseudouridine synthase A from Tropheryma whipplei (strain TW08/27) (Whipple's bacillus).